The following is a 261-amino-acid chain: tRNA pseudouridine synthase A (261 aa).

Residue Asp51 is the Nucleophile of the active site. Tyr109 provides a ligand contact to substrate.

It belongs to the tRNA pseudouridine synthase TruA family. Homodimer.

It catalyses the reaction uridine(38/39/40) in tRNA = pseudouridine(38/39/40) in tRNA. In terms of biological role, formation of pseudouridine at positions 38, 39 and 40 in the anticodon stem and loop of transfer RNAs. In Shewanella halifaxensis (strain HAW-EB4), this protein is tRNA pseudouridine synthase A.